The following is a 314-amino-acid chain: Probable serine/threonine-protein kinase WNK11 (314 aa).

Residues 1 to 22 (MMTCASSDDNESEKDKDSESFV) are disordered. One can recognise a Protein kinase domain in the interval 31–289 (GRYGELLGSG…AAELLCDPFF (259 aa)). 111 to 114 (TEIC) is a binding site for ATP. Asp-178 serves as the catalytic Proton acceptor. A disordered region spans residues 295–314 (DDDEDGENNDNNGAGRIVVS).

This sequence belongs to the protein kinase superfamily. Ser/Thr protein kinase family. WNK subfamily.

It catalyses the reaction L-seryl-[protein] + ATP = O-phospho-L-seryl-[protein] + ADP + H(+). The enzyme catalyses L-threonyl-[protein] + ATP = O-phospho-L-threonyl-[protein] + ADP + H(+). Its function is as follows. May regulate flowering time by modulating the photoperiod pathway. This chain is Probable serine/threonine-protein kinase WNK11 (WNK11), found in Arabidopsis thaliana (Mouse-ear cress).